A 424-amino-acid chain; its full sequence is Sulfate adenylyltransferase (424 aa).

Belongs to the sulfate adenylyltransferase family.

The catalysed reaction is sulfate + ATP + H(+) = adenosine 5'-phosphosulfate + diphosphate. It participates in sulfur metabolism; hydrogen sulfide biosynthesis; sulfite from sulfate: step 1/3. The sequence is that of Sulfate adenylyltransferase from Desulfatibacillum aliphaticivorans.